We begin with the raw amino-acid sequence, 62 residues long: Photosystem II reaction center protein Z (62 aa).

The next 2 membrane-spanning stretches (helical) occupy residues 8 to 28 (ALAA…FAYA) and 41 to 61 (WVGS…NFFV).

It belongs to the PsbZ family. As to quaternary structure, PSII is composed of 1 copy each of membrane proteins PsbA, PsbB, PsbC, PsbD, PsbE, PsbF, PsbH, PsbI, PsbJ, PsbK, PsbL, PsbM, PsbT, PsbX, PsbY, PsbZ, Psb30/Ycf12, peripheral proteins PsbO, CyanoQ (PsbQ), PsbU, PsbV and a large number of cofactors. It forms dimeric complexes.

The protein resides in the cellular thylakoid membrane. Functionally, may control the interaction of photosystem II (PSII) cores with the light-harvesting antenna, regulates electron flow through the 2 photosystem reaction centers. PSII is a light-driven water plastoquinone oxidoreductase, using light energy to abstract electrons from H(2)O, generating a proton gradient subsequently used for ATP formation. This chain is Photosystem II reaction center protein Z, found in Gloeothece citriformis (strain PCC 7424) (Cyanothece sp. (strain PCC 7424)).